The sequence spans 91 residues: Large ribosomal subunit protein bL28 (91 aa).

The segment at 1 to 23 is disordered; it reads MSRVCELTGKGPMSGNNVSHANN.

The protein belongs to the bacterial ribosomal protein bL28 family.

The sequence is that of Large ribosomal subunit protein bL28 from Paracoccus denitrificans (strain Pd 1222).